Reading from the N-terminus, the 466-residue chain is Cysteine--tRNA ligase (466 aa).

C28 serves as a coordination point for Zn(2+). Positions 30–40 (PTVYNFFHIGN) match the 'HIGH' region motif. C208, H233, and E237 together coordinate Zn(2+). The short motif at 265–269 (KMSKS) is the 'KMSKS' region element. K268 serves as a coordination point for ATP.

It belongs to the class-I aminoacyl-tRNA synthetase family. In terms of assembly, monomer. The cofactor is Zn(2+).

It localises to the cytoplasm. It catalyses the reaction tRNA(Cys) + L-cysteine + ATP = L-cysteinyl-tRNA(Cys) + AMP + diphosphate. This chain is Cysteine--tRNA ligase, found in Clostridium perfringens (strain SM101 / Type A).